Consider the following 406-residue polypeptide: Protrudin (406 aa).

Residues 1-71 (MQAAERDGVA…AAEGVRALLR (71 aa)) are Cytoplasmic-facing. Residues 1 to 97 (MQAAERDGVA…LLLTLDQAAW (97 aa)) are sufficient for homooligomerization. Residues 1-210 (MQAAERDGVA…LYLLPLCWVM (210 aa)) are sufficient for localization to endoplasmic reticulum tubular network. The helical transmembrane segment at 72–92 (WQRPLCSLLVCLGLNFLLLTL) threads the bilayer. A topological domain (lumenal) is located at residue Asp93. Residues 94 to 114 (QAAWYSVLALLVLLPALLGYL) form a helical membrane-spanning segment. At 115–192 (QETYRVRPSE…NPTVSSQFYG (78 aa)) the chain is on the cytoplasmic side. An intramembrane region (helical) is located at residues 193 to 213 (ALLGSVCILYLLPLCWVMAIL). Residues 214–406 (NSTLFLGNSQ…CAQCNQMLIK (193 aa)) are Cytoplasmic-facing. The interval 239 to 295 (LGTKPLESAPEPAKPLPTDAPPDRTPTPTSTEDLTPGSVEEAEEAEPDEEFKDAIEE) is disordered. The span at 250–263 (PAKPLPTDAPPDRT) shows a compositional bias: pro residues. A compositionally biased stretch (acidic residues) spans 278 to 295 (EEAEEAEPDEEFKDAIEE). The segment at 339–405 (SNNFGTCTGC…VCAQCNQMLI (67 aa)) adopts an FYVE-type zinc-finger fold. Cys345, Cys348, Cys361, Cys364, Cys369, Cys372, Cys397, and Cys400 together coordinate Zn(2+).

In terms of assembly, can form homooligomers (monomers, dimers and tetramers).

It is found in the recycling endosome membrane. The protein resides in the endoplasmic reticulum membrane. Its subcellular location is the cell projection. The protein localises to the growth cone membrane. Functionally, key regulator of RAB11-dependent vesicular trafficking during neurite extension through polarized membrane transport. Promotes axonal elongation and contributes to the establishment of neuronal cell polarity. Involved in nerve growth factor-induced neurite formation in VAPA-dependent manner. Contributes to both the formation and stabilization of the tubular ER network. Involved in ER morphogenesis by regulating the sheet-to-tubule balance and possibly the density of tubule interconnections. The protein is Protrudin (ZFYVE27) of Gallus gallus (Chicken).